The sequence spans 60 residues: Large ribosomal subunit protein uL30 (60 aa).

It belongs to the universal ribosomal protein uL30 family. In terms of assembly, part of the 50S ribosomal subunit.

The sequence is that of Large ribosomal subunit protein uL30 from Cupriavidus necator (strain ATCC 17699 / DSM 428 / KCTC 22496 / NCIMB 10442 / H16 / Stanier 337) (Ralstonia eutropha).